Consider the following 973-residue polypeptide: MEDCNVHSAASILASVKEQEARFERLTRALEQERRHVALQLERAQQPGMSSGGMVGSGQPLPMAWQQLVLQEQSPGSQASLATMPEAPEVLEETVTVEEDPGTPTSHVSIVTSEDGTTRRTETKVTKTVKTVTTRTVRQVPLGPDGLPLLDGGPPLGSFADGPLDRHYVLRGGGPAATLSRAYLSSGGGFPDGPEPRDIPSYGSLSRGLGVRPPRTGLLGPGPGDGCFTLPGRREAFPMGSESGPPSGRSLPEHFQAEPYGLEDDTRSLAADDEGGPDLEPDYSTATRRRPEYGRGLRARALEDTADDTGELVEERPPFPAATAPLAQPERGSLGSLDRVVRRSPSVDSTRKEPRWRDPELPEVLAMLRHPVDPVKANAAAYLQHLCFENEGIKRRVRQLRGLPLLVALLDHPRAEVRRRACGALRNLSYGRDADNKAAIRDCGGVPALVRLLRAARDNEVRELVTGTLWNLSSYEPLKMVIIDHGLQTLTHEVIVPHSGWEREPNEDSKPRDAEWTTVFKNTSGCLRNVSSDGAEARRRLRECEGLVDALLHALQSAVGRKDTDNKSVENCVCIMRNLSYHVHKEVPGADRYQEVEPGIPGSAATSQRRRKDDASCFGGKKAKGKKDAEADRNFDTLDLPKRTEAAKGFELLYQPEVVRLYLSLLTESRNFNTLEAAAGALQNLSAGNWMWATYIRATVRKERGLPVLVELLQSETDKVVRAVAIALRNLSLDQRNKDLIGSYAMTELVRNVRNAQAPAHPSAHLEEDTVVAVLNTIHEIVSDSLDNARSLLQARGVPALVALVASSQSVREAKAASHVLQTVWSYKELRGALQRDGWTKAHFQSASTAKGPKGTPNSGGFDDSTLPLVDKNLDGEKSTTRDVIPMDTLGPDGYSTVDRRERRTLGSDSIGDSSEKELLKGPGPAVCSSDHMEVIGRGPSGTDPVLGPGAPPFCVGLAKPLVYLALPSSLLS.

The segment at 95–123 (VTVEEDPGTPTSHVSIVTSEDGTTRRTET) is disordered. Thr-103 and Thr-105 each carry phosphothreonine. Polar residues predominate over residues 103-115 (TPTSHVSIVTSED). The residue at position 171 (Arg-171) is an Omega-N-methylarginine. 2 disordered regions span residues 233 to 254 (RREA…LPEH) and 267 to 331 (RSLA…QPER). Residue Ser-268 is modified to Phosphoserine. Residues 271–281 (ADDEGGPDLEP) are compositionally biased toward acidic residues. Over residues 289 to 303 (RRPEYGRGLRARALE) the composition is skewed to basic and acidic residues. Ser-333, Ser-336, Ser-344, and Ser-346 each carry phosphoserine. ARM repeat units lie at residues 349–388 (STRK…HLCF), 391–430 (EGIK…NLSY), 434–468 (ADNK…VTGT), 469–509 (LWNL…NEDS), 527–566 (LRNV…DTDN), and 576–623 (MRNL…GKKA). Positions 593 to 623 (YQEVEPGIPGSAATSQRRRKDDASCFGGKKA) are disordered. Ser-607 bears the Phosphoserine mark. The Nuclear localization signal motif lies at 608–624 (QRRRKDDASCFGGKKAK). A Phosphothreonine modification is found at Thr-637. ARM repeat units follow at residues 641 to 681 (PKRT…AAGA), 694 to 733 (TYIR…NLSL), 734 to 776 (DQRN…AVLN), and 777 to 821 (TIHE…SHVL). The tract at residues 771-955 (VVAVLNTIHE…VLGPGAPPFC (185 aa)) is required for interaction with RNA-binding proteins DDX5, HNRNPH2 and SRSF1 and with mRNAs. The segment at 844 to 926 (FQSASTAKGP…KELLKGPGPA (83 aa)) is disordered. Ser-865 carries the post-translational modification Phosphoserine. Thr-866 bears the Phosphothreonine mark. Residues 872 to 881 (KNLDGEKSTT) are compositionally biased toward basic and acidic residues.

This sequence belongs to the beta-catenin family. As to quaternary structure, component of a ribonucleoprotein complex containing mRNAs and RNA-binding proteins including DDX5, HNRNPH2 and SRSF1 as well as ARVCF. Interacts (via the extreme C-terminus) with FRMPD2 (via the PDZ 2 domain). Interacts with CCDC85B. As to expression, expressed in optic nerve sheath envelope (at protein level). Expressed in heart (at protein level).

Its subcellular location is the cell junction. The protein resides in the adherens junction. The protein localises to the nucleus. It localises to the cytoplasm. Its function is as follows. Contributes to the regulation of alternative splicing of pre-mRNAs. In Rattus norvegicus (Rat), this protein is Splicing regulator ARVCF.